Here is a 113-residue protein sequence, read N- to C-terminus: Hydrogenase maturation factor HypA 1 (113 aa).

Histidine 2 contacts Ni(2+). Positions 73, 76, 89, and 92 each coordinate Zn(2+).

The protein belongs to the HypA/HybF family.

Its function is as follows. Involved in the maturation of [NiFe] hydrogenases. Required for nickel insertion into the metal center of the hydrogenase. This Bradyrhizobium diazoefficiens (strain JCM 10833 / BCRC 13528 / IAM 13628 / NBRC 14792 / USDA 110) protein is Hydrogenase maturation factor HypA 1.